We begin with the raw amino-acid sequence, 57 residues long: MSKTVVRKNESLEDALRRFKRTVSKSGTLQESRKREFYEKPSVKRKKKSEAARKRKF.

The segment at 24–57 (SKSGTLQESRKREFYEKPSVKRKKKSEAARKRKF) is disordered. Over residues 31–42 (ESRKREFYEKPS) the composition is skewed to basic and acidic residues. The segment covering 43–57 (VKRKKKSEAARKRKF) has biased composition (basic residues).

This sequence belongs to the bacterial ribosomal protein bS21 family.

In Listeria innocua serovar 6a (strain ATCC BAA-680 / CLIP 11262), this protein is Small ribosomal subunit protein bS21 (rpsU).